Reading from the N-terminus, the 211-residue chain is Uridine kinase (211 aa).

12–19 (GGSGSGKT) lines the ATP pocket.

It belongs to the uridine kinase family.

It is found in the cytoplasm. It carries out the reaction uridine + ATP = UMP + ADP + H(+). It catalyses the reaction cytidine + ATP = CMP + ADP + H(+). It participates in pyrimidine metabolism; CTP biosynthesis via salvage pathway; CTP from cytidine: step 1/3. Its pathway is pyrimidine metabolism; UMP biosynthesis via salvage pathway; UMP from uridine: step 1/1. The sequence is that of Uridine kinase from Bacillus licheniformis (strain ATCC 14580 / DSM 13 / JCM 2505 / CCUG 7422 / NBRC 12200 / NCIMB 9375 / NCTC 10341 / NRRL NRS-1264 / Gibson 46).